The chain runs to 148 residues: Lysozyme C (148 aa).

A signal peptide spans 1–18 (MKALIILGLVLLSVTVQG). The C-type lysozyme domain maps to 19–148 (KIFERCELAR…VSQYVKGCGV (130 aa)). Cystine bridges form between Cys24-Cys146, Cys48-Cys134, Cys83-Cys99, and Cys95-Cys113. Active-site residues include Glu53 and Asp71.

This sequence belongs to the glycosyl hydrolase 22 family. As to quaternary structure, monomer.

The protein localises to the secreted. It carries out the reaction Hydrolysis of (1-&gt;4)-beta-linkages between N-acetylmuramic acid and N-acetyl-D-glucosamine residues in a peptidoglycan and between N-acetyl-D-glucosamine residues in chitodextrins.. Its function is as follows. Lysozymes have primarily a bacteriolytic function; those in tissues and body fluids are associated with the monocyte-macrophage system and enhance the activity of immunoagents. The sequence is that of Lysozyme C (LYZ) from Nasalis larvatus (Proboscis monkey).